Consider the following 364-residue polypeptide: DNA replication and repair protein RecF (364 aa).

An ATP-binding site is contributed by G30–T37.

Belongs to the RecF family.

It localises to the cytoplasm. In terms of biological role, the RecF protein is involved in DNA metabolism; it is required for DNA replication and normal SOS inducibility. RecF binds preferentially to single-stranded, linear DNA. It also seems to bind ATP. The polypeptide is DNA replication and repair protein RecF (Pseudoalteromonas translucida (strain TAC 125)).